Consider the following 391-residue polypeptide: Steroid side-chain-cleaving aldolase (391 aa).

The Proton acceptor role is filled by tyrosine 294. Tyrosine 344 functions as the Proton donor in the catalytic mechanism.

Belongs to the thiolase-like superfamily. As to quaternary structure, homodimer. Interacts with the ChsH1/ChsH2 hydratase via the DUF35 C-terminal region of ChsH2 (ChsH2-DUF35).

The catalysed reaction is 17-hydroxy-3-oxochol-4-en-22-oyl-CoA = androst-4-ene-3,17-dione + propanoyl-CoA. Probably involved in bile acid degradation. In vitro, when associated with the ChsH1/ChsH2 hydratase, catalyzes the retroaldol cleavage of 17-hydroxy-3-oxo-4-pregnene-20-carboxyl-CoA (17-HOPC-CoA), forming androst-4-ene-3,17-dione and propionyl-CoA. The in vivo substrate is probably a closely analogous bile acid degradation metabolite. This Thermomonospora curvata (strain ATCC 19995 / DSM 43183 / JCM 3096 / KCTC 9072 / NBRC 15933 / NCIMB 10081 / Henssen B9) protein is Steroid side-chain-cleaving aldolase.